Consider the following 609-residue polypeptide: Sporulation-specific protein 21 (609 aa).

Disordered stretches follow at residues 1 to 50 (MDNI…LENS), 68 to 96 (PASKSSRSIGSMKSNQSLVSMKSSDDGNS), and 124 to 165 (KLDS…SIKG). Residues 10–31 (MEGTSTMTVTSRSSEDSSCISN) show a composition bias toward polar residues. A compositionally biased stretch (basic and acidic residues) spans 32–43 (HEQDTDTHKDGD). Residues 68–81 (PASKSSRSIGSMKS) are compositionally biased toward low complexity. Polar residues-rich tracts occupy residues 82–96 (NQSLVSMKSSDDGNS) and 127–136 (STGSQRSKNN). A compositionally biased stretch (low complexity) spans 143–159 (SSTTSQTTCSSSSSSSS). Coiled-coil stretches lie at residues 283–342 (RTKI…DNES), 357–393 (RETLDRVNREQQLIIDQNEFLKKSVNELQNEVNATNF), and 424–483 (ENLT…LLIE). Residues 586 to 609 (DQKSNQNSSTPYKQSQRQVPHSIK) are disordered. The span at 587-609 (QKSNQNSSTPYKQSQRQVPHSIK) shows a compositional bias: polar residues.

Belongs to the MPC70 family. As to quaternary structure, interacts directly with MPC54, NUD1 and SPC42. Interacts with ADY3. Interacts with ADY4. Probable component of a SPB complex composed of ADY3, SSP1, DON1, MPC54, SPO21/MPC70, NUD1 and CNM67.

The protein localises to the prospore membrane. It is found in the cytoplasm. Its subcellular location is the cytoskeleton. The protein resides in the spindle pole. Involved in the pathway that organizes the shaping and sizing of the prospore membrane (PSM) during sporulation. May provide a meiosis-specific scaffold for the assembly of other proteins on spindle pole bodies (SPBs), and may be a limiting component for SPB formation. The protein is Sporulation-specific protein 21 (SPO21) of Saccharomyces cerevisiae (strain ATCC 204508 / S288c) (Baker's yeast).